Here is a 454-residue protein sequence, read N- to C-terminus: tRNA modification GTPase MnmE (454 aa).

The (6S)-5-formyl-5,6,7,8-tetrahydrofolate site is built by Arg-23, Glu-80, and Lys-120. A TrmE-type G domain is found at 216-377 (GMKVVIAGRP…LRNHLKQSMG (162 aa)). Asn-226 contacts K(+). Residues 226 to 231 (NAGKSS), 245 to 251 (TDIAGTT), 270 to 273 (DTAG), 335 to 338 (NKAD), and 358 to 360 (SAR) contribute to the GTP site. Ser-230 serves as a coordination point for Mg(2+). Residues Thr-245, Ile-247, and Thr-250 each coordinate K(+). Thr-251 contributes to the Mg(2+) binding site. A (6S)-5-formyl-5,6,7,8-tetrahydrofolate-binding site is contributed by Lys-454.

Belongs to the TRAFAC class TrmE-Era-EngA-EngB-Septin-like GTPase superfamily. TrmE GTPase family. As to quaternary structure, homodimer. Heterotetramer of two MnmE and two MnmG subunits. K(+) is required as a cofactor.

The protein localises to the cytoplasm. Exhibits a very high intrinsic GTPase hydrolysis rate. Involved in the addition of a carboxymethylaminomethyl (cmnm) group at the wobble position (U34) of certain tRNAs, forming tRNA-cmnm(5)s(2)U34. This Escherichia coli O139:H28 (strain E24377A / ETEC) protein is tRNA modification GTPase MnmE.